Consider the following 162-residue polypeptide: MERFFENAMYASRWLLAPIYFGLSLGLLALCLKFFQEIFHVIPNIFSLAEADLILVLLSLIDMALVGGLLVMVMISGYENFVSQLDIDEDKEKLNWLGTMDSSSLKMKVAASIVAISSIHLLRVFMDATNIKPEYLMWYVIIHMTFVISAFAMGYLDKVTKH.

Helical transmembrane passes span 15–35, 53–73, 109–129, and 136–156; these read LLAP…LKFF, LILV…LVMV, VAAS…MDAT, and LMWY…MGYL.

Belongs to the UPF0114 family.

Its subcellular location is the cell membrane. The chain is UPF0114 protein Psyr_4257 from Pseudomonas syringae pv. syringae (strain B728a).